Consider the following 68-residue polypeptide: MKTTELRQKDVAGLQAEVKELQKAHFGLRMQKATQQLNNTATLRSTRRDIARAKTILVEKQSAETSAK.

Belongs to the universal ribosomal protein uL29 family.

This chain is Large ribosomal subunit protein uL29, found in Albidiferax ferrireducens (strain ATCC BAA-621 / DSM 15236 / T118) (Rhodoferax ferrireducens).